Consider the following 145-residue polypeptide: Inner membrane protein YiaA (145 aa).

Residues 1 to 12 (MDNKISTYSPAF) lie on the Cytoplasmic side of the membrane. Residues 13–32 (SIVSWIALVGGIVTYLLGLW) traverse the membrane as a helical segment. Residues 33–41 (NAEMQLNEK) are Periplasmic-facing. Residues 42–59 (GYYFAVLVLGLFSAASYQ) traverse the membrane as a helical segment. The Cytoplasmic portion of the chain corresponds to 60 to 71 (KTVRDKYEGIPT). Residues 72–94 (TSIYYMTCLTVFIISVALLMVGL) traverse the membrane as a helical segment. Over 95–98 (WNAT) the chain is Periplasmic. The chain crosses the membrane as a helical span at residues 99–121 (LLLSEKGFYGLAFFLSLFGAVAV). Over 122–145 (QKNIRDAGINPPKETQVTQEEYSE) the chain is Cytoplasmic.

The protein localises to the cell inner membrane. In Escherichia coli (strain K12), this protein is Inner membrane protein YiaA (yiaA).